The chain runs to 146 residues: Hemoglobin subunit beta (146 aa).

Val-1 bears the N-acetylvaline mark. Residues 2 to 146 (HLTAEEKSAV…VANALAHKYH (145 aa)) form the Globin domain. A Phosphothreonine modification is found at Thr-12. Ser-44 bears the Phosphoserine mark. Lys-59 bears the N6-acetyllysine mark. Residue His-63 participates in heme b binding. An N6-acetyllysine modification is found at Lys-82. Residue His-92 participates in heme b binding. Residue Cys-93 is modified to S-nitrosocysteine. The residue at position 144 (Lys-144) is an N6-acetyllysine.

It belongs to the globin family. As to quaternary structure, heterotetramer of two alpha chains and two beta chains. Red blood cells.

Its function is as follows. Involved in oxygen transport from the lung to the various peripheral tissues. The sequence is that of Hemoglobin subunit beta (HBB) from Leptonychotes weddellii (Weddell seal).